The primary structure comprises 518 residues: Protein nucleotidyltransferase YdiU (518 aa).

The span at 1–10 (MTHLQFDNRL) shows a compositional bias: basic and acidic residues. Residues 1-23 (MTHLQFDNRLRAQLPGDPEQGPR) are disordered. ATP contacts are provided by Gly100, Gly102, Arg103, Lys123, Asp135, Gly136, Arg193, and Arg200. The Proton acceptor role is filled by Asp270. Residues Asn271 and Asp280 each contribute to the Mg(2+) site. Residue Asp280 participates in ATP binding.

The protein belongs to the SELO family. Requires Mg(2+) as cofactor. Mn(2+) serves as cofactor.

It catalyses the reaction L-seryl-[protein] + ATP = 3-O-(5'-adenylyl)-L-seryl-[protein] + diphosphate. The catalysed reaction is L-threonyl-[protein] + ATP = 3-O-(5'-adenylyl)-L-threonyl-[protein] + diphosphate. It carries out the reaction L-tyrosyl-[protein] + ATP = O-(5'-adenylyl)-L-tyrosyl-[protein] + diphosphate. The enzyme catalyses L-histidyl-[protein] + UTP = N(tele)-(5'-uridylyl)-L-histidyl-[protein] + diphosphate. It catalyses the reaction L-seryl-[protein] + UTP = O-(5'-uridylyl)-L-seryl-[protein] + diphosphate. The catalysed reaction is L-tyrosyl-[protein] + UTP = O-(5'-uridylyl)-L-tyrosyl-[protein] + diphosphate. In terms of biological role, nucleotidyltransferase involved in the post-translational modification of proteins. It can catalyze the addition of adenosine monophosphate (AMP) or uridine monophosphate (UMP) to a protein, resulting in modifications known as AMPylation and UMPylation. In Xanthomonas campestris pv. campestris (strain B100), this protein is Protein nucleotidyltransferase YdiU.